Reading from the N-terminus, the 340-residue chain is MSEKNAYAKSGVDVEAGYEVVERIKKHVARTERAGVMGALGGFGGMFDLSKTGVREPVLVSGTDGVGTKLMLAIKYQQHDTIGQDCVAMCVNDIIAAGAEPLYFLDYVATGKNEPAKLEQVVAGVAEGCVQAGAALIGGETAEMPGMYGEDDYDLAGFAVGVAEKSQIIDGSKVKEGDILLGLASSGIHSNGYSLVRRVFADYTGNEVLPELEGKQLKDVLLEPTRIYVKAVLPLIKEELVNGIAHITGGGFIENVPRMFADDLAAEIDEDKVPVLPIFNAIEKYGDIKHEEMFEIFNMGVGLMLAVSPENVNRVKELLDEPVYEIGRIIKKADDSVVIK.

Belongs to the AIR synthase family.

Its subcellular location is the cytoplasm. The catalysed reaction is 2-formamido-N(1)-(5-O-phospho-beta-D-ribosyl)acetamidine + ATP = 5-amino-1-(5-phospho-beta-D-ribosyl)imidazole + ADP + phosphate + H(+). Its pathway is purine metabolism; IMP biosynthesis via de novo pathway; 5-amino-1-(5-phospho-D-ribosyl)imidazole from N(2)-formyl-N(1)-(5-phospho-D-ribosyl)glycinamide: step 2/2. The chain is Phosphoribosylformylglycinamidine cyclo-ligase from Streptococcus agalactiae serotype Ia (strain ATCC 27591 / A909 / CDC SS700).